The following is a 198-amino-acid chain: Ribonuclease HII (198 aa).

Positions 11–198 (ELIAGVDEVG…SPVRKLLENE (188 aa)) constitute an RNase H type-2 domain. 3 residues coordinate a divalent metal cation: aspartate 17, glutamate 18, and aspartate 109.

The protein belongs to the RNase HII family. Requires Mn(2+) as cofactor. Mg(2+) serves as cofactor.

The protein localises to the cytoplasm. It carries out the reaction Endonucleolytic cleavage to 5'-phosphomonoester.. Its function is as follows. Endonuclease that specifically degrades the RNA of RNA-DNA hybrids. The polypeptide is Ribonuclease HII (Mannheimia succiniciproducens (strain KCTC 0769BP / MBEL55E)).